Consider the following 569-residue polypeptide: Cryptochrome DASH, chloroplastic/mitochondrial (569 aa).

Residues 84–221 (GVTILWFRND…KLELIWGSTM (138 aa)) form the Photolyase/cryptochrome alpha/beta domain. FAD is bound by residues Tyr316 and 329–333 (STKFS). ATP is bound at residue Arg436. 2 residues coordinate FAD: Asp466 and Asp468. An ATP-binding site is contributed by Asp485. A disordered region spans residues 541–569 (GNGPMAGGSKSGGGFRGSHSGRRSRHNGP). Residues 544–556 (PMAGGSKSGGGFR) are compositionally biased toward gly residues. The segment covering 559 to 569 (HSGRRSRHNGP) has biased composition (basic residues).

Belongs to the DNA photolyase class-1 family. As to quaternary structure, homodimer. FAD serves as cofactor. It depends on (6R)-5,10-methylene-5,6,7,8-tetrahydrofolate as a cofactor.

The protein localises to the plastid. Its subcellular location is the chloroplast. It is found in the mitochondrion. Functionally, may have a photoreceptor function. Binds ss- and ds-DNA in a sequence non-specific manner. Has a photolyase activity specific for cyclobutane pyrimidine dimers in ssDNA. In Arabidopsis thaliana (Mouse-ear cress), this protein is Cryptochrome DASH, chloroplastic/mitochondrial (CRYD).